The primary structure comprises 91 residues: DNA-binding protein HRL53 (91 aa).

The tract at residues 57–91 (ATKGRNPSTGAEVDIPARNVPKFTPGKGLKDAVNG) is disordered.

The protein belongs to the bacterial histone-like protein family.

Its function is as follows. Histone-like DNA-binding protein which is capable of wrapping DNA to stabilize it, and thus to prevent its denaturation under extreme environmental conditions. Binds to nod promoters and induces DNA binding. The polypeptide is DNA-binding protein HRL53 (Rhizobium leguminosarum).